Here is a 465-residue protein sequence, read N- to C-terminus: Poly(A) polymerase I (465 aa).

Catalysis depends on residues Asp-80, Asp-82, and Asp-162. The disordered stretch occupies residues 430–465; that stretch reads APPEQKGMLNELDDDPAPRRRRSRPRKRAPRREGTV. Basic residues predominate over residues 448–459; the sequence is RRRRSRPRKRAP.

This sequence belongs to the tRNA nucleotidyltransferase/poly(A) polymerase family.

The enzyme catalyses RNA(n) + ATP = RNA(n)-3'-adenine ribonucleotide + diphosphate. Its function is as follows. Adds poly(A) tail to the 3' end of many RNAs, which usually targets these RNAs for decay. Plays a significant role in the global control of gene expression, through influencing the rate of transcript degradation, and in the general RNA quality control. This Salmonella typhimurium (strain LT2 / SGSC1412 / ATCC 700720) protein is Poly(A) polymerase I.